Reading from the N-terminus, the 333-residue chain is Phosphate acyltransferase (333 aa).

The protein belongs to the PlsX family. In terms of assembly, homodimer. Probably interacts with PlsY.

It localises to the cytoplasm. It catalyses the reaction a fatty acyl-[ACP] + phosphate = an acyl phosphate + holo-[ACP]. It functions in the pathway lipid metabolism; phospholipid metabolism. Catalyzes the reversible formation of acyl-phosphate (acyl-PO(4)) from acyl-[acyl-carrier-protein] (acyl-ACP). This enzyme utilizes acyl-ACP as fatty acyl donor, but not acyl-CoA. The sequence is that of Phosphate acyltransferase from Lactobacillus acidophilus (strain ATCC 700396 / NCK56 / N2 / NCFM).